The following is a 703-amino-acid chain: MSDDWDETDAAPASDWNIESFGLPTSFGSTKKTCNTGNAFNDGEGGFDEGSQSNFDDPFRSGGGGFGGRGRGGPRACFKCGDEGHMARDCPSASDSRGNRTNNRRQDNWGGGSSSKPANGEPFGFGSAFGDNQESDPFGATESSGFGFGSGSGSRGGRRNDGGRGCFKCGEEGHMSRDCPSGGGRNKGCFKCGQEGHNARDCPNPGEGSEEKKPRAPLYIPADVNEDELFVMGIEAGSNFDAYANVPANVSGAEPIQPAAESFQSMNLRPLLLENIVKAGYGCPTPVQKYTIPNVMNGRDIMACAQTGSGKTAAFLLPMLHYILDNNCPSNAFEEPAQPTGLVICPTRELAIQIMREARKFSHSSVAKCCVAYGGAAGFHQLKTIHSGCHILVATPGRLLDFLEKGKIVFSSLKYLVLDEADRMLDMGFLSSIKTVINHKTMTPTAERITLMFSATFPHEIQELASAFLNNYLFVVVGTVGAANTDVKQEVLCVPKFEKKAKLVEMCEEILISADDEKILVFVEQKRVADFVGTYLCEKKFRATTMHGDRYQAQREQALSEFRTGVHNILVATAVTARGLDIKGIGVVVNYDLPKDIDEYVHRIGRTGRLGNRGLSISFYDDETDACLTKDLVKVLSEANQTIPDWLTQKANASGHAQTYHGSGLFASSDIRSKNGGGRGWEKNQASSFLGGPSESNVDEEWD.

Disordered regions lie at residues 1-22 (MSDD…ESFG), 35-73 (NTGN…GRGG), and 88-167 (RDCP…RGCF). Positions 61-73 (SGGGGFGGRGRGG) are enriched in gly residues. A CCHC-type 1 zinc finger spans residues 77-92 (CFKCGDEGHMARDCPS). Residues 146–155 (FGFGSGSGSR) show a composition bias toward gly residues. 2 CCHC-type zinc fingers span residues 166–181 (CFKC…DCPS) and 189–204 (CFKC…DCPN). The Q motif signature appears at 261-289 (ESFQSMNLRPLLLENIVKAGYGCPTPVQK). Residues 292-475 (IPNVMNGRDI…SAFLNNYLFV (184 aa)) enclose the Helicase ATP-binding domain. 305-312 (AQTGSGKT) provides a ligand contact to ATP. Residues 419 to 422 (DEAD) carry the DEAD box motif. Positions 506-651 (MCEEILISAD…TIPDWLTQKA (146 aa)) constitute a Helicase C-terminal domain. The interval 676-703 (GGGRGWEKNQASSFLGGPSESNVDEEWD) is disordered.

The protein belongs to the DEAD box helicase family. DDX4/VASA subfamily. As to expression, expressed in ovaries and testis. Not expressed in somatic tissue of the ovaries including follicle cells, muscle and connective tissue.

It localises to the cytoplasm. The protein localises to the nucleus. Its subcellular location is the nucleolus. It catalyses the reaction ATP + H2O = ADP + phosphate + H(+). Involved in translational control mechanisms operating in early stages of oogenesis. Required maternally in many stages of oogenesis, including cystocyte differentiation, oocyte differentiation, and specification of anterior-posterior polarity in the developing cysts. Essential for the formation and/or structural integrity of perinuclear nuage particles during germ cell formation. The protein is Probable ATP-dependent RNA helicase vasa-like of Penaeus vannamei (Whiteleg shrimp).